Consider the following 430-residue polypeptide: ATP-dependent RNA helicase RhlB (430 aa).

The Q motif motif lies at 9–37 (QKFSDFALHPQVIEALETKGFHNCTPIQA). The Helicase ATP-binding domain maps to 40–219 (LPFTLSGRDV…FENMNNAEYV (180 aa)). Residue 53–60 (AQTGTGKT) coordinates ATP. Residues 165-168 (DEAD) carry the DEAD box motif. The Helicase C-terminal domain occupies 245-390 (RLLQTLIEEE…VSRYNSDALM (146 aa)). The segment at 388-430 (ALMTDLPPPKRLTRNRSGNGPRRGGNNNRRSSASRSPNRKRSG) is disordered. Over residues 402–423 (NRSGNGPRRGGNNNRRSSASRS) the composition is skewed to low complexity.

The protein belongs to the DEAD box helicase family. RhlB subfamily. In terms of assembly, component of the RNA degradosome, which is a multiprotein complex involved in RNA processing and mRNA degradation.

It localises to the cytoplasm. It catalyses the reaction ATP + H2O = ADP + phosphate + H(+). Functionally, DEAD-box RNA helicase involved in RNA degradation. Has RNA-dependent ATPase activity and unwinds double-stranded RNA. This Erwinia tasmaniensis (strain DSM 17950 / CFBP 7177 / CIP 109463 / NCPPB 4357 / Et1/99) protein is ATP-dependent RNA helicase RhlB.